The chain runs to 617 residues: Proline--tRNA ligase (617 aa).

The protein belongs to the class-II aminoacyl-tRNA synthetase family. ProS type 1 subfamily. In terms of assembly, homodimer.

The protein resides in the cytoplasm. The enzyme catalyses tRNA(Pro) + L-proline + ATP = L-prolyl-tRNA(Pro) + AMP + diphosphate. In terms of biological role, catalyzes the attachment of proline to tRNA(Pro) in a two-step reaction: proline is first activated by ATP to form Pro-AMP and then transferred to the acceptor end of tRNA(Pro). As ProRS can inadvertently accommodate and process non-cognate amino acids such as alanine and cysteine, to avoid such errors it has two additional distinct editing activities against alanine. One activity is designated as 'pretransfer' editing and involves the tRNA(Pro)-independent hydrolysis of activated Ala-AMP. The other activity is designated 'posttransfer' editing and involves deacylation of mischarged Ala-tRNA(Pro). The misacylated Cys-tRNA(Pro) is not edited by ProRS. The chain is Proline--tRNA ligase from Streptococcus agalactiae serotype V (strain ATCC BAA-611 / 2603 V/R).